Here is a 456-residue protein sequence, read N- to C-terminus: tRNA modification GTPase MnmE (456 aa).

Arginine 24, glutamate 81, and lysine 120 together coordinate (6S)-5-formyl-5,6,7,8-tetrahydrofolate. The TrmE-type G domain occupies 216–379 (GMTVVIAGRP…LRDHLKACMG (164 aa)). Asparagine 226 is a binding site for K(+). Residues 226 to 231 (NAGKSS), 245 to 251 (TDIAGTT), 270 to 273 (DTAG), and 335 to 338 (NKAD) each bind GTP. Position 230 (serine 230) interacts with Mg(2+). K(+) is bound by residues threonine 245, isoleucine 247, and threonine 250. A Mg(2+)-binding site is contributed by threonine 251. Lysine 456 lines the (6S)-5-formyl-5,6,7,8-tetrahydrofolate pocket.

Belongs to the TRAFAC class TrmE-Era-EngA-EngB-Septin-like GTPase superfamily. TrmE GTPase family. Homodimer. Heterotetramer of two MnmE and two MnmG subunits. K(+) is required as a cofactor.

Its subcellular location is the cytoplasm. Exhibits a very high intrinsic GTPase hydrolysis rate. Involved in the addition of a carboxymethylaminomethyl (cmnm) group at the wobble position (U34) of certain tRNAs, forming tRNA-cmnm(5)s(2)U34. The sequence is that of tRNA modification GTPase MnmE from Pseudomonas putida (strain GB-1).